The sequence spans 281 residues: Bifunctional protein FolD (281 aa).

NADP(+)-binding positions include 165–167 (GRG), T192, and V233.

It belongs to the tetrahydrofolate dehydrogenase/cyclohydrolase family. As to quaternary structure, homodimer.

It catalyses the reaction (6R)-5,10-methylene-5,6,7,8-tetrahydrofolate + NADP(+) = (6R)-5,10-methenyltetrahydrofolate + NADPH. The catalysed reaction is (6R)-5,10-methenyltetrahydrofolate + H2O = (6R)-10-formyltetrahydrofolate + H(+). It functions in the pathway one-carbon metabolism; tetrahydrofolate interconversion. Functionally, catalyzes the oxidation of 5,10-methylenetetrahydrofolate to 5,10-methenyltetrahydrofolate and then the hydrolysis of 5,10-methenyltetrahydrofolate to 10-formyltetrahydrofolate. This chain is Bifunctional protein FolD, found in Mycobacterium marinum (strain ATCC BAA-535 / M).